Consider the following 263-residue polypeptide: Acetylglutamate kinase (263 aa).

Substrate contacts are provided by residues 48–49 (GG), Arg-70, and Asn-162.

Belongs to the acetylglutamate kinase family. ArgB subfamily.

Its subcellular location is the cytoplasm. The catalysed reaction is N-acetyl-L-glutamate + ATP = N-acetyl-L-glutamyl 5-phosphate + ADP. It functions in the pathway amino-acid biosynthesis; L-arginine biosynthesis; N(2)-acetyl-L-ornithine from L-glutamate: step 2/4. Catalyzes the ATP-dependent phosphorylation of N-acetyl-L-glutamate. In Vibrio vulnificus (strain CMCP6), this protein is Acetylglutamate kinase.